A 64-amino-acid chain; its full sequence is Large ribosomal subunit protein bL35 (64 aa).

Residues 22–31 (GKVKHGHAYR) show a composition bias toward basic residues. Residues 22 to 64 (GKVKHGHAYRSHLAQSKTTKQKRQSRKSTLMNNSDFKRLKKLI) form a disordered region.

This sequence belongs to the bacterial ribosomal protein bL35 family.

The polypeptide is Large ribosomal subunit protein bL35 (Mesomycoplasma hyopneumoniae (strain 232) (Mycoplasma hyopneumoniae)).